Reading from the N-terminus, the 779-residue chain is Ribosome-releasing factor 2, mitochondrial (779 aa).

The tr-type G domain maps to 68–353; the sequence is AKIRNIGIMA…AVTTYLPSPE (286 aa). GTP contacts are provided by residues 77–84, 141–145, and 195–198; these read AHIDAGKT, DTPGH, and NKMD.

This sequence belongs to the TRAFAC class translation factor GTPase superfamily. Classic translation factor GTPase family. EF-G/EF-2 subfamily.

It localises to the mitochondrion. The enzyme catalyses GTP + H2O = GDP + phosphate + H(+). Mitochondrial GTPase that mediates the disassembly of ribosomes from messenger RNA at the termination of mitochondrial protein biosynthesis. Acts in collaboration with MRRF. GTP hydrolysis follows the ribosome disassembly and probably occurs on the ribosome large subunit. Not involved in the GTP-dependent ribosomal translocation step during translation elongation. In Mus musculus (Mouse), this protein is Ribosome-releasing factor 2, mitochondrial (Gfm2).